A 202-amino-acid chain; its full sequence is Urease accessory protein UreG (202 aa).

GTP is bound at residue 13–20; sequence GPVGAGKT.

The protein belongs to the SIMIBI class G3E GTPase family. UreG subfamily. Homodimer. UreD, UreF and UreG form a complex that acts as a GTP-hydrolysis-dependent molecular chaperone, activating the urease apoprotein by helping to assemble the nickel containing metallocenter of UreC. The UreE protein probably delivers the nickel.

Its subcellular location is the cytoplasm. Its function is as follows. Facilitates the functional incorporation of the urease nickel metallocenter. This process requires GTP hydrolysis, probably effectuated by UreG. The sequence is that of Urease accessory protein UreG from Dinoroseobacter shibae (strain DSM 16493 / NCIMB 14021 / DFL 12).